The chain runs to 444 residues: Argininosuccinate synthase (444 aa).

ATP contacts are provided by residues 18–26 (AFSGGLDTS) and alanine 44. Tyrosine 100 contributes to the L-citrulline binding site. Residues glycine 130 and threonine 132 each coordinate ATP. L-aspartate is bound by residues threonine 132, asparagine 136, and aspartate 137. Asparagine 136 serves as a coordination point for L-citrulline. Aspartate 137 is a binding site for ATP. 2 residues coordinate L-citrulline: arginine 140 and serine 193. Aspartate 195 is an ATP binding site. Positions 202, 204, and 281 each coordinate L-citrulline.

It belongs to the argininosuccinate synthase family. Type 2 subfamily. In terms of assembly, homotetramer.

The protein resides in the cytoplasm. The enzyme catalyses L-citrulline + L-aspartate + ATP = 2-(N(omega)-L-arginino)succinate + AMP + diphosphate + H(+). The protein operates within amino-acid biosynthesis; L-arginine biosynthesis; L-arginine from L-ornithine and carbamoyl phosphate: step 2/3. This Actinobacillus succinogenes (strain ATCC 55618 / DSM 22257 / CCUG 43843 / 130Z) protein is Argininosuccinate synthase.